We begin with the raw amino-acid sequence, 344 residues long: Type VI secretion system component TssA1 (344 aa).

In terms of assembly, homododecamer. Interacts with TssB1 and TssC1. Interacts with TssK1 and TssF1.

Its function is as follows. Core component of the H1 type VI (H1-T6SS) secretion system that plays a role in the release of toxins targeting both eukaryotic and prokaryotic species. Forms a dodecameric ring-shaped structure located at one end of the T6SS sheath. May properly attach the pre-assembled sheath onto the baseplate and/or stabilize the sheaths tubular structure. The sequence is that of Type VI secretion system component TssA1 from Pseudomonas aeruginosa (strain ATCC 15692 / DSM 22644 / CIP 104116 / JCM 14847 / LMG 12228 / 1C / PRS 101 / PAO1).